The sequence spans 375 residues: Filamin-binding LIM protein 1 (375 aa).

Residues 1–69 are filamin-binding; it reads MASKPEKRVA…KTWTPSGKTN (69 aa). Positions 40–176 are disordered; it reads ARPWEMLPTK…PPPEEPVTLP (137 aa). Residues 60-83 are compositionally biased toward polar residues; that stretch reads KTWTPSGKTNASLSGVTPQLSNGG. 2 stretches are compositionally biased toward pro residues: residues 98-107 and 133-144; these read LPPPPPPPSA and LPPPPPPPPPQA. LIM zinc-binding domains follow at residues 183–244, 245–302, and 303–372; these read DVCG…TLEK, CGKC…RKFA, and PVCS…RSAA. An FERMT2-binding region spans residues 278–375; sequence ISDESFALDS…HLKRSAAGCC (98 aa).

As to quaternary structure, interacts with FERMT2, FLNA, FLNB and FLNC. Interacts with NKX2-5.

The protein localises to the cell junction. Its subcellular location is the focal adhesion. It localises to the cytoplasm. It is found in the cytoskeleton. The protein resides in the stress fiber. Its function is as follows. Serves as an anchoring site for cell-ECM adhesion proteins and filamin-containing actin filaments. Is implicated in cell shape modulation (spreading) and motility. May participate in the regulation of filamin-mediated cross-linking and stabilization of actin filaments. May also regulate the assembly of filamin-containing signaling complexes that control actin assembly. Promotes dissociation of FLNA from ITGB3 and ITGB7. Promotes activation of integrins and regulates integrin-mediated cell-cell adhesion. This chain is Filamin-binding LIM protein 1 (Fblim1), found in Mus musculus (Mouse).